We begin with the raw amino-acid sequence, 355 residues long: Protein RecA (355 aa).

74–81 provides a ligand contact to ATP; that stretch reads GPESSGKT.

This sequence belongs to the RecA family.

The protein resides in the cytoplasm. Its function is as follows. Can catalyze the hydrolysis of ATP in the presence of single-stranded DNA, the ATP-dependent uptake of single-stranded DNA by duplex DNA, and the ATP-dependent hybridization of homologous single-stranded DNAs. It interacts with LexA causing its activation and leading to its autocatalytic cleavage. This is Protein RecA from Cytophaga hutchinsonii (strain ATCC 33406 / DSM 1761 / CIP 103989 / NBRC 15051 / NCIMB 9469 / D465).